A 396-amino-acid polypeptide reads, in one-letter code: Elongation factor Tu (396 aa).

Residues lysine 10 to glutamate 205 enclose the tr-type G domain. The interval glycine 19–threonine 26 is G1. Glycine 19–threonine 26 is a binding site for GTP. Threonine 26 contributes to the Mg(2+) binding site. The G2 stretch occupies residues glycine 62 to asparagine 66. Positions aspartate 83–glycine 86 are G3. GTP-binding positions include aspartate 83–histidine 87 and asparagine 138–aspartate 141. Residues asparagine 138–aspartate 141 form a G4 region. Positions serine 175–leucine 177 are G5.

It belongs to the TRAFAC class translation factor GTPase superfamily. Classic translation factor GTPase family. EF-Tu/EF-1A subfamily. As to quaternary structure, monomer.

The protein resides in the cytoplasm. It catalyses the reaction GTP + H2O = GDP + phosphate + H(+). Functionally, GTP hydrolase that promotes the GTP-dependent binding of aminoacyl-tRNA to the A-site of ribosomes during protein biosynthesis. The protein is Elongation factor Tu of Corynebacterium aurimucosum (strain ATCC 700975 / DSM 44827 / CIP 107346 / CN-1) (Corynebacterium nigricans).